An 88-amino-acid chain; its full sequence is Actobindin (88 aa).

M1 carries the post-translational modification N-acetylmethionine. Residues 1-22 form a disordered region; the sequence is MNPELQSAIGQGAALKHAETVD. An N6,N6,N6-trimethyllysine modification is found at K35. The 18-residue stretch at 37-54 folds into the WH2 domain; it reads DRSSFLEEVAKPHELKHA. Residue K72 is modified to N6,N6,N6-trimethyllysine.

As to quaternary structure, monomer.

Its function is as follows. Is able to bind two actin monomers at high concentrations of G-actin. This chain is Actobindin, found in Acanthamoeba castellanii (Amoeba).